A 569-amino-acid chain; its full sequence is Pyruvate decarboxylase (569 aa).

Pyruvate is bound by residues Asp-38 and His-124. Thiamine diphosphate-binding positions include Thr-398 and 421 to 423 (GSI). A Mg(2+)-binding site is contributed by Asp-451. Residues 452–453 (GS) and 478–483 (NEGYTI) each bind thiamine diphosphate. Mg(2+) contacts are provided by Asn-478 and Gly-480. Glu-484 contributes to the pyruvate binding site.

Belongs to the TPP enzyme family. As to quaternary structure, homotetramer. Mg(2+) is required as a cofactor. The cofactor is thiamine diphosphate.

The enzyme catalyses a 2-oxocarboxylate + H(+) = an aldehyde + CO2. It catalyses the reaction pyruvate + H(+) = acetaldehyde + CO2. This Aspergillus fumigatus (strain ATCC MYA-4609 / CBS 101355 / FGSC A1100 / Af293) (Neosartorya fumigata) protein is Pyruvate decarboxylase (pdcA).